We begin with the raw amino-acid sequence, 118 residues long: Cell division topological specificity factor (118 aa).

The disordered stretch occupies residues Arg86–Glu118. Positions Ala99–Ser112 are enriched in low complexity.

The protein belongs to the MinE family.

In terms of biological role, prevents the cell division inhibition by proteins MinC and MinD at internal division sites while permitting inhibition at polar sites. This ensures cell division at the proper site by restricting the formation of a division septum at the midpoint of the long axis of the cell. This Prochlorococcus marinus (strain MIT 9313) protein is Cell division topological specificity factor.